The sequence spans 287 residues: Pyridoxal kinase PdxY (287 aa).

Substrate contacts are provided by residues S10 and T45–Q46. Residues D112, A144, E149, K182, and R209–V212 each bind ATP. D224 is a substrate binding site.

It belongs to the pyridoxine kinase family. PdxY subfamily. As to quaternary structure, homodimer. Mg(2+) is required as a cofactor.

It carries out the reaction pyridoxal + ATP = pyridoxal 5'-phosphate + ADP + H(+). It participates in cofactor metabolism; pyridoxal 5'-phosphate salvage; pyridoxal 5'-phosphate from pyridoxal: step 1/1. Pyridoxal kinase involved in the salvage pathway of pyridoxal 5'-phosphate (PLP). Catalyzes the phosphorylation of pyridoxal to PLP. This Shigella dysenteriae serotype 1 (strain Sd197) protein is Pyridoxal kinase PdxY.